A 1298-amino-acid chain; its full sequence is Activating molecule in BECN1-regulated autophagy protein 1 (1298 aa).

The interval Met-1 to Ala-22 is interaction with DDB1. Residue Lys-45 forms a Glycyl lysine isopeptide (Lys-Gly) (interchain with G-Cter in ubiquitin) linkage. WD repeat units follow at residues Asp-51–Ser-90, Gly-93–Phe-133, and Asp-135–Lys-175. Phosphoserine; by MTOR is present on Ser-52. Residues Ile-254 to Ala-266 show a composition bias toward polar residues. A disordered region spans residues Ile-254 to Thr-284. Over residues Pro-268–Pro-277 the composition is skewed to pro residues. The short motif at Pro-275–Arg-281 is the PxP motif 1 element. The residue at position 328 (Ser-328) is a Phosphoserine. A disordered region spans residues Phe-343–Gly-413. A compositionally biased stretch (polar residues) spans Gln-354 to Asn-385. Phosphoserine is present on residues Ser-394 and Ser-443. Composition is skewed to polar residues over residues Ser-458–Thr-467, His-547–Ser-561, and Asn-590–Gln-601. 4 disordered regions span residues Ser-458–Ser-494, Ile-538–Ser-561, Asn-590–Arg-690, and Arg-747–Met-796. Composition is skewed to low complexity over residues Val-602–Ser-614 and Ser-628–Ser-639. 2 positions are modified to phosphoserine: Ser-635 and Ser-639. The span at Tyr-661–Ala-674 shows a compositional bias: polar residues. Asymmetric dimethylarginine is present on Arg-747. Residues Thr-772–Asp-781 show a composition bias toward acidic residues. The residue at position 1043 (Ser-1043) is a Phosphoserine; by IKKA. The short motif at Ser-1043–Leu-1052 is the LIR element. Residues His-1060–Thr-1075 show a composition bias toward polar residues. Residues His-1060–Asp-1079 are disordered. 2 short sequence motifs (TQT motif) span residues Thr-1104–Thr-1106 and Thr-1116–Thr-1118. 3 disordered regions span residues Gln-1112–Ser-1143, Arg-1190–Leu-1214, and Ser-1227–Arg-1298. Positions Ser-1191–Arg-1212 are enriched in polar residues. A Phosphoserine modification is found at Ser-1205. The PxP motif 2 motif lies at Pro-1206 to Arg-1212.

Belongs to the WD repeat AMBRA1 family. In terms of assembly, component of the DCX(AMBRA1) E3 ubiquitin ligase complex, also named CRL4(AMBRA1), at least composed of CUL4 (CUL4A or CUL4B), DDB1, AMBRA1 and RBX1. Interacts with BECN1. Probably forms a complex with BECN1 and PIK3C3. Interacts with BECN2. Interacts with BCL2; leading to prevent interaction with BCN1 and autophagy, interaction is disrupted upon autophagy induction. Interacts with ULK1. Interacts (via PxP motifs) with PPP2CA; enhancing interaction between PPP2CA and MYC or FOXO3. Forms a complex with PPP2CA and BECN1; AMBRA1 and BECN1 components of the complex regulate MYC stability via different pathways. Interacts (TQT motifs) with DYNLL1 and DYNLL2; tethering AMBRA1 and the BECN1-PIK3C3 complex in absence of autophagy. Interacts with TRAF6; interaction is required to mediate 'Lys-63'-linked ubiquitination of ULK1. Interacts with TRIM32; promoting activation of ULK1 by TRIM32 via unanchored 'Lys-63'-linked polyubiquitin chains. Interacts with PRKN. Interacts (via LIR motif) with LC3 (MAP1LC3A, MAP1LC3B or MAP1LC3C). Interacts with HUWE1. Interacts with PTK2/FAK. Interacts with SRC; required for SRC trafficking to autophagosomes. In terms of processing, phosphorylation at Ser-52 by MTOR inhibits its ability to regulate autophagy and mediate ubiquitination of ULK1. Phosphorylation by ULK1 in response to autophagy induction abolishes interaction with DYNLL1 and DYNLL2, releasing AMBRA1 from the cytoskeletal docking site to induce autophagosome nucleation. Phosphorylation by MTOR inhibits interaction with PPP2CA and subsequent dephosphorylation of MYC. Phosphorylation at Ser-1043 by CHUK/IKKA promotes its interaction with ATG8 family proteins GABARAP and MAP1LC3B and its mitophagic activity. Post-translationally, ubiquitinated by RNF2 via 'Lys-48'-linkage in unstressed cells, leading to its degradation by the proteasome. Induction of autophagy promotes stabilization via interaction with CUL4 (CUL4A or CUL4B) and DDB1. Upon prolonged starvation, ubiquitinated and degraded, terminating the autophagy response. Undergoes proteolytic processing by caspase-6 (CASP6), caspase-7 (CASP7) and caspase-8 (CASP8) during apoptosis, resulting in the dismantling of the autophagic machinery and the accomplishment of the programmed cell death program. Also cleaved by calpains during apoptosis, which mediate a complete proteolytic degradation.

It localises to the endoplasmic reticulum. The protein localises to the cytoplasm. It is found in the cytoskeleton. Its subcellular location is the cytoplasmic vesicle. The protein resides in the autophagosome. It localises to the mitochondrion. The protein localises to the cytosol. It is found in the nucleus. Its subcellular location is the cell junction. The protein resides in the focal adhesion. Its pathway is protein modification; protein ubiquitination. Its function is as follows. Substrate-recognition component of a DCX (DDB1-CUL4-X-box) E3 ubiquitin-protein ligase complex involved in cell cycle control and autophagy. The DCX(AMBRA1) complex specifically mediates the polyubiquitination of target proteins such as BECN1, CCND1, CCND2, CCND3, ELOC and ULK1. Acts as an upstream master regulator of the transition from G1 to S cell phase: AMBRA1 specifically recognizes and binds phosphorylated cyclin-D (CCND1, CCND2 and CCND3), leading to cyclin-D ubiquitination by the DCX(AMBRA1) complex and subsequent degradation. By controlling the transition from G1 to S phase and cyclin-D degradation, AMBRA1 acts as a tumor suppressor that promotes genomic integrity during DNA replication and counteracts developmental abnormalities and tumor growth. AMBRA1 also regulates the cell cycle by promoting MYC dephosphorylation and degradation independently of the DCX(AMBRA1) complex: acts via interaction with the catalytic subunit of protein phosphatase 2A (PPP2CA), which enhances interaction between PPP2CA and MYC, leading to MYC dephosphorylation and degradation. Acts as a regulator of Cul5-RING (CRL5) E3 ubiquitin-protein ligase complexes by mediating ubiquitination and degradation of Elongin-C (ELOC) component of CRL5 complexes. Acts as a key regulator of autophagy by modulating the BECN1-PIK3C3 complex: controls protein turnover during neuronal development, and regulates normal cell survival and proliferation. In normal conditions, AMBRA1 is tethered to the cytoskeleton via interaction with dyneins DYNLL1 and DYNLL2. Upon autophagy induction, AMBRA1 is released from the cytoskeletal docking site to induce autophagosome nucleation by mediating ubiquitination of proteins involved in autophagy. The DCX(AMBRA1) complex mediates 'Lys-63'-linked ubiquitination of BECN1, increasing the association between BECN1 and PIK3C3 to promote PIK3C3 activity. In collaboration with TRAF6, AMBRA1 mediates 'Lys-63'-linked ubiquitination of ULK1 following autophagy induction, promoting ULK1 stability and kinase activity. Also activates ULK1 via interaction with TRIM32: TRIM32 stimulates ULK1 through unanchored 'Lys-63'-linked polyubiquitin chains. Also acts as an activator of mitophagy via interaction with PRKN and LC3 proteins (MAP1LC3A, MAP1LC3B or MAP1LC3C); possibly by bringing damaged mitochondria onto autophagosomes. Also activates mitophagy by acting as a cofactor for HUWE1; acts by promoting HUWE1-mediated ubiquitination of MFN2. AMBRA1 is also involved in regulatory T-cells (Treg) differentiation by promoting FOXO3 dephosphorylation independently of the DCX(AMBRA1) complex: acts via interaction with PPP2CA, which enhances interaction between PPP2CA and FOXO3, leading to FOXO3 dephosphorylation and stabilization. May act as a regulator of intracellular trafficking, regulating the localization of active PTK2/FAK and SRC. Also involved in transcription regulation by acting as a scaffold for protein complexes at chromatin. This is Activating molecule in BECN1-regulated autophagy protein 1 from Homo sapiens (Human).